The following is a 108-amino-acid chain: Thioredoxin (108 aa).

The Thioredoxin domain occupies 2-108 (NKIIELTDQN…LKEFLDENIN (107 aa)). Cys32 and Cys35 are disulfide-bonded.

The protein belongs to the thioredoxin family.

Its function is as follows. Participates in various redox reactions through the reversible oxidation of its active center dithiol to a disulfide and catalyzes dithiol-disulfide exchange reactions. In Buchnera aphidicola subsp. Acyrthosiphon pisum (strain APS) (Acyrthosiphon pisum symbiotic bacterium), this protein is Thioredoxin (trxA).